We begin with the raw amino-acid sequence, 553 residues long: Solute carrier family 22 member 12 (553 aa).

The helical transmembrane segment at 9–29 threads the bilayer; that stretch reads LVGGLGRFQVLQTMALMVSIM. Residues Asn56 and Asn102 are each glycosylated (N-linked (GlcNAc...) asparagine). Helical transmembrane passes span 146-166, 174-194, 195-215, 232-252, 260-280, 351-371, 378-398, 407-427, 435-455, 466-486, and 495-515; these read PMAQSIYLAGILVGAAACGPA, LVLTWSYLQMAVMGTAAAFAP, AFPVYCLFRFLLAFAVAGVMM, LVMTLNSLGFSFGHGLTAAVA, LLQLVVSVPFFLCFLYSWWLA, CISTLCWFAFGFTFFGLALDL, IFLLQMFIGVVDIPAKMGALL, PTLAASLLLAGLCILANTLVP, SALAVLGLGGVGAAFTCITIY, MTAVGLGQMAARGGAILGPLV, and WLPLLVYGTVPVLSGLAALLL. Thr542 is subject to Phosphothreonine.

This sequence belongs to the major facilitator (TC 2.A.1) superfamily. Organic cation transporter (TC 2.A.1.19) family. As to quaternary structure, interacts with PDZK1. N-glycosylated. As to expression, detected in kidney (at protein level). Detected in fetal and adult kidney. Detected in epithelial cells of proximal tubules in renal cortex.

The protein resides in the apical cell membrane. The catalysed reaction is urate(out) + (S)-lactate(in) = urate(in) + (S)-lactate(out). It carries out the reaction nicotinate(in) + urate(out) = nicotinate(out) + urate(in). The enzyme catalyses urate(out) + n chloride(in) = urate(in) + n chloride(out). It catalyses the reaction orotate(out) + nicotinate(in) = orotate(in) + nicotinate(out). Functionally, electroneutral antiporter that translocates urate across the apical membrane of proximal tubular cells in exchange for monovalent organic or inorganic anions. Involved in renal reabsorption of urate and helps maintaining blood levels of uric acid. Mediates urate uptake by an exchange with organic anions such as (S)-lactate and nicotinate, and inorganic anion Cl(-). Other inorganic anions such as Br(-), I(-) and NO3(-) may also act as counteranions that exchange for urate. Also mediates orotate tubular uptake coupled with nicotinate efflux and to a lesser extent with lactate efflux, therefore displaying a potential role in orotate renal reabsorption. Orotate transport is Cl(-)-dependent. This chain is Solute carrier family 22 member 12, found in Homo sapiens (Human).